The chain runs to 329 residues: L-threonine dehydratase catabolic TdcB (329 aa).

Arg53–Thr54 contributes to the AMP binding site. An N6-(pyridoxal phosphate)lysine modification is found at Lys58. Residues Gln88, Asp119–Tyr120, and Asn314 contribute to the AMP site.

This sequence belongs to the serine/threonine dehydratase family. In the native structure, TdcB is in a dimeric form, whereas in the TdcB-AMP complex, it exists in a tetrameric form (dimer of dimers). Pyridoxal 5'-phosphate serves as cofactor.

The enzyme catalyses L-threonine = 2-oxobutanoate + NH4(+). The catalysed reaction is L-serine = pyruvate + NH4(+). It functions in the pathway amino-acid degradation; L-threonine degradation via propanoate pathway; propanoate from L-threonine: step 1/4. With respect to regulation, each protein molecule can bind up to four molecules of AMP, which act as an allosteric activator to the enzyme. Catalyzes the anaerobic formation of alpha-ketobutyrate and ammonia from threonine in a two-step reaction. The first step involved a dehydration of threonine and a production of enamine intermediates (aminocrotonate), which tautomerizes to its imine form (iminobutyrate). Both intermediates are unstable and short-lived. The second step is the nonenzymatic hydrolysis of the enamine/imine intermediates to form 2-ketobutyrate and free ammonia. In the low water environment of the cell, the second step is accelerated by RidA. TdcB also dehydrates serine to yield pyruvate via analogous enamine/imine intermediates. This chain is L-threonine dehydratase catabolic TdcB (tdcB), found in Escherichia coli O157:H7.